The following is a 386-amino-acid chain: 2-isopropylmalate synthase (386 aa).

A Pyruvate carboxyltransferase domain is found at 12 to 265; the sequence is VRIFDTTLRD…DVGVRTYLLY (254 aa). Residues aspartate 21, histidine 203, histidine 205, and asparagine 239 each contribute to the a divalent metal cation site.

The protein belongs to the alpha-IPM synthase/homocitrate synthase family. As to quaternary structure, homodimer. Requires a divalent metal cation as cofactor.

It catalyses the reaction 3-methyl-2-oxobutanoate + acetyl-CoA + H2O = (2S)-2-isopropylmalate + CoA + H(+). The protein operates within amino-acid biosynthesis; L-leucine biosynthesis; L-leucine from 3-methyl-2-oxobutanoate: step 1/4. Its activity is regulated as follows. Is not inhibited by leucine. Catalyzes the condensation of the acetyl group of acetyl-CoA with 3-methyl-2-oxobutanoate (2-oxoisovalerate) to form 3-carboxy-3-hydroxy-4-methylpentanoate (2-isopropylmalate). Carries out the first step of the leucine biosynthesis pathway. Also displays a low citramalate synthase activity, using pyruvate as substrate, but is unable to use 2-oxoglutarate. This Sulfolobus acidocaldarius (strain ATCC 33909 / DSM 639 / JCM 8929 / NBRC 15157 / NCIMB 11770) protein is 2-isopropylmalate synthase.